Consider the following 239-residue polypeptide: Ribosomal RNA small subunit methyltransferase G (239 aa).

S-adenosyl-L-methionine-binding positions include G77, F82, 128–129, and R147; that span reads AE. The tract at residues 219 to 239 is disordered; sequence RKTPKKYPRKPGTPNKLPIEK.

It belongs to the methyltransferase superfamily. RNA methyltransferase RsmG family.

It localises to the cytoplasm. Specifically methylates the N7 position of guanine in position 535 of 16S rRNA. The chain is Ribosomal RNA small subunit methyltransferase G from Bacillus cytotoxicus (strain DSM 22905 / CIP 110041 / 391-98 / NVH 391-98).